A 697-amino-acid polypeptide reads, in one-letter code: Hormonally up-regulated neu tumor-associated kinase homolog (697 aa).

A Protein kinase domain is found at 55 to 313 (YLIGRKLGEG…IQQALANRWL (259 aa)). ATP contacts are provided by residues 61–69 (LGEGSFAKV) and Lys-84. Catalysis depends on Asp-179, which acts as the Proton acceptor. 2 stretches are compositionally biased toward basic and acidic residues: residues 405–424 (KMNKNSYEERRSKDLEKRGE) and 460–473 (PVKERRSSKSERES). 2 disordered regions span residues 405–480 (KMNK…LSPF) and 586–642 (DNTS…NCVR). Positions 586–600 (DNTSPIKGHSNQASF) are enriched in polar residues. Positions 607–626 (SPSSPESMSPTSPHSPHSPS) are enriched in low complexity. Over residues 627 to 637 (CNNNISGNLGS) the composition is skewed to polar residues.

It belongs to the protein kinase superfamily. CAMK Ser/Thr protein kinase family. SNF1 subfamily.

It carries out the reaction L-seryl-[protein] + ATP = O-phospho-L-seryl-[protein] + ADP + H(+). It catalyses the reaction L-threonyl-[protein] + ATP = O-phospho-L-threonyl-[protein] + ADP + H(+). This Xenopus tropicalis (Western clawed frog) protein is Hormonally up-regulated neu tumor-associated kinase homolog (hunk).